Reading from the N-terminus, the 455-residue chain is MTKSQTNPRGPAILSPADLTVIIVGLGIAGLTAAIECHRKGYTVIGLEKKPDANQLGDIIGLSGNSMRILAEWNNGSLAHLIDDDITCDVTALELFDAEGHRKLAMPYNANNPIQGYLFRRTGLLTSLCHYASQLGIDLRFGVTVDDYWETDSNAGVYANNEKITGDCVVAADGFHSKARGIITGENPEPKDIGVVAYRSIFDANAIADVPEAQWILKNAQTADIFHSYYGKDTMVAIGTAARGRYVHWGCAVRGALEEKYEAWMQPAPPDPILKCLESWPVGSKLAAGIARTPPGKCFQQSLRAMPPLKRWVSTGGRMIVIGDAAHSFLPYAGQGGNQAIEDAAVLGICLELAGTSNVPLALRVVEKLRHKRVSLIQKGSAEAGDSFLNAAWESDNAAEKPTAFTHQAWVYAHNCVDHAYEQFNAAAEAVMNGWEYTPTNIPANGKFRQEEGNI.

A helical transmembrane segment spans residues 11-31 (PAILSPADLTVIIVGLGIAGL). 2 residues coordinate FAD: E48 and G61. N75 is a glycosylation site (N-linked (GlcNAc...) asparagine). R121 is an FAD binding site. Active-site residues include R199 and Y229. FAD-binding residues include D324 and G337.

This sequence belongs to the paxM FAD-dependent monooxygenase family. Requires FAD as cofactor.

The protein localises to the membrane. The enzyme catalyses notoamide E + NADPH + O2 + H(+) = notoamide C + NADP(+) + H2O. It catalyses the reaction notoamide E + NADPH + O2 + H(+) = notoamide D + NADP(+) + H2O. The protein operates within alkaloid biosynthesis. Its function is as follows. FAD-dependent monooxygenase; part of the gene cluster that mediates the biosynthesis of notoamide, a fungal indole alkaloid that belongs to a family of natural products containing a characteristic bicyclo[2.2.2]diazaoctane core. The first step of notoamide biosynthesis involves coupling of L-proline and L-tryptophan by the bimodular NRPS notE', to produce cyclo-L-tryptophan-L-proline called brevianamide F. The reverse prenyltransferase notF' then acts as a deoxybrevianamide E synthase and converts brevianamide F to deoxybrevianamide E via reverse prenylation at C-2 of the indole ring leading to the bicyclo[2.2.2]diazaoctane core. Deoxybrevianamide E is further hydroxylated at C-6 of the indole ring, likely catalyzed by the cytochrome P450 monooxygenase notG', to yield 6-hydroxy-deoxybrevianamide E. 6-hydroxy-deoxybrevianamide E is a specific substrate of the prenyltransferase notC' for normal prenylation at C-7 to produce 6-hydroxy-7-prenyl-deoxybrevianamide, also called notoamide S. As the proposed pivotal branching point in notoamide biosynthesis, notoamide S can be diverted to notoamide E through an oxidative pyran ring closure putatively catalyzed by either notH' cytochrome P450 monooxygenase or the notD' FAD-linked oxidoreductase. This step would be followed by an indole 2,3-epoxidation-initiated pinacol-like rearrangement catalyzed by the notB' FAD-dependent monooxygenase leading to the formation of notoamide C and notoamide D. On the other hand notoamide S is converted to notoamide T by notH' (or notD'), a bifunctional oxidase that also functions as the intramolecular Diels-Alderase responsible for generation of (-)-notoamide T. To generate antipodal (+)-notoaminide T, notH (or notD) in Aspergillus strain MF297-2 is expected to catalyze a Diels-Alder reaction leading to the opposite stereochemistry. The remaining oxidoreductase notD' (or notH') likely catalyzes the oxidative pyran ring formation to yield (-)-stephacidin A. The FAD-dependent monooxygenase notI' is highly similar to notB' and is predicted to catalyze a similar conversion from (-)-stephacidin A to (+)-notoamide B via the 2,3-epoxidation of (-)-stephacidin A followed by a pinacol-type rearrangement. Finally, it remains unclear which enzyme could be responsible for the final hydroxylation steps leading to notoamide A and sclerotiamide. The chain is Notoamide E oxidase notB' from Aspergillus versicolor.